Reading from the N-terminus, the 264-residue chain is LIMR family protein SELMODRAFT_416716 (264 aa).

Transmembrane regions (helical) follow at residues 23–43, 96–116, 194–214, and 225–245; these read VVIL…VIGY, ILFT…LIFA, IIWL…FPFL, and WGLL…MSVI.

This sequence belongs to the LIMR family.

The protein resides in the membrane. This chain is LIMR family protein SELMODRAFT_416716, found in Selaginella moellendorffii (Spikemoss).